Here is a 1026-residue protein sequence, read N- to C-terminus: Multidrug resistance protein MdtC (1026 aa).

10 consecutive transmembrane segments (helical) span residues 12 to 34 (VATL…LLPV), 336 to 353 (QSLI…FLFL), 360 to 382 (AIPA…LCGF), 431 to 450 (VGFT…LPLL), 463 to 485 (FAVT…TPML), 525 to 547 (HARW…YISI), 853 to 875 (LLLI…ESYV), 895 to 917 (LEWF…IGIV), 948 to 970 (LLRF…PLVL), and 985 to 1007 (TIVG…VYLF).

This sequence belongs to the resistance-nodulation-cell division (RND) (TC 2.A.6) family. MdtC subfamily. As to quaternary structure, part of a tripartite efflux system composed of MdtA, MdtB and MdtC. MdtC forms a heteromultimer with MdtB.

Its subcellular location is the cell inner membrane. This is Multidrug resistance protein MdtC from Pectobacterium atrosepticum (strain SCRI 1043 / ATCC BAA-672) (Erwinia carotovora subsp. atroseptica).